Reading from the N-terminus, the 121-residue chain is Parathyroid hormone 4 (121 aa).

An N-terminal signal peptide occupies residues 1 to 24 (MLKMQRSQQRVALMMLMVVAAVHC). Positions 25–29 (QESES) are excised as a propeptide. The tract at residues 77–97 (RSRGAQLYSQPGREESSGGQK) is disordered.

Belongs to the parathyroid hormone family. As to expression, specifically expressed in a bilateral cluster of neurons in the dorsal region of the periventricular hypothalamus. Their axons project through the midbrain and hindbrain and down the spinal cord.

Its subcellular location is the secreted. Neuroendocrine peptide which is produced by a subset of neurons in the hypothalamus. Activates the G-protein coupled receptors pth1ra, pth1rb and pth2r with similar affinity. Receptor binding stimulates intracellular cAMP production. Plays a role in bone mineralization by regulating expression of factors involved in phosphate homeostasis. Important for embryonic bone development. The chain is Parathyroid hormone 4 from Danio rerio (Zebrafish).